We begin with the raw amino-acid sequence, 400 residues long: Queuine tRNA-ribosyltransferase (400 aa).

The Proton acceptor role is filled by D93. Residues 93–97 (DSGGF), D166, and G247 contribute to the substrate site. The RNA binding stretch occupies residues 277–283 (GIGDVDD). D296 functions as the Nucleophile in the catalytic mechanism. An RNA binding; important for wobble base 34 recognition region spans residues 301 to 305 (TRLGR). Positions 338, 340, 343, and 369 each coordinate Zn(2+).

It belongs to the queuine tRNA-ribosyltransferase family. Homodimer. Within each dimer, one monomer is responsible for RNA recognition and catalysis, while the other monomer binds to the replacement base PreQ1. Requires Zn(2+) as cofactor.

The enzyme catalyses 7-aminomethyl-7-carbaguanine + guanosine(34) in tRNA = 7-aminomethyl-7-carbaguanosine(34) in tRNA + guanine. It participates in tRNA modification; tRNA-queuosine biosynthesis. Its function is as follows. Catalyzes the base-exchange of a guanine (G) residue with the queuine precursor 7-aminomethyl-7-deazaguanine (PreQ1) at position 34 (anticodon wobble position) in tRNAs with GU(N) anticodons (tRNA-Asp, -Asn, -His and -Tyr). Catalysis occurs through a double-displacement mechanism. The nucleophile active site attacks the C1' of nucleotide 34 to detach the guanine base from the RNA, forming a covalent enzyme-RNA intermediate. The proton acceptor active site deprotonates the incoming PreQ1, allowing a nucleophilic attack on the C1' of the ribose to form the product. After dissociation, two additional enzymatic reactions on the tRNA convert PreQ1 to queuine (Q), resulting in the hypermodified nucleoside queuosine (7-(((4,5-cis-dihydroxy-2-cyclopenten-1-yl)amino)methyl)-7-deazaguanosine). The sequence is that of Queuine tRNA-ribosyltransferase from Roseiflexus sp. (strain RS-1).